The chain runs to 299 residues: GTPase Era (299 aa).

The 171-residue stretch at 5–175 folds into the Era-type G domain; that stretch reads RSGFVCFVGR…TDVLAGKLPP (171 aa). The G1 stretch occupies residues 13-20; sequence GRPNTGKS. Residue 13 to 20 participates in GTP binding; it reads GRPNTGKS. Residues 39–43 form a G2 region; the sequence is QTTRH. The tract at residues 60-63 is G3; sequence DTPG. GTP-binding positions include 60–64 and 124–127; these read DTPGL and TKID. The tract at residues 124–127 is G4; sequence TKID. The G5 stretch occupies residues 154–156; sequence VSA. In terms of domain architecture, KH type-2 spans 206 to 285; the sequence is VRDELPHSLA…YLDLRVKIAK (80 aa).

The protein belongs to the TRAFAC class TrmE-Era-EngA-EngB-Septin-like GTPase superfamily. Era GTPase family. In terms of assembly, monomer.

It is found in the cell envelope. The protein resides in the secreted. The protein localises to the cell wall. In terms of biological role, exhibits GTPase activity. Binds RNA but is probably not involved in ribosome assembly in mycobacteria. The chain is GTPase Era from Mycobacterium sp. (strain JLS).